The sequence spans 93 residues: MTRKKTNPFVAHHLLAKIEKVNMKEEKETIVTWSRASSILPAMVGHTIAIHNGKEHIPIYITNPMVGRKLGEFVPTRHFTSYESARKDTKSRR.

This sequence belongs to the universal ribosomal protein uS19 family.

It is found in the plastid. The protein resides in the chloroplast. Functionally, protein S19 forms a complex with S13 that binds strongly to the 16S ribosomal RNA. The chain is Small ribosomal subunit protein uS19c from Oryza nivara (Indian wild rice).